Reading from the N-terminus, the 326-residue chain is MILCCGEALIDMLPRDTTLGEKGFAPYAGGAIFNTAIALGRLGIPTAFFTGIADDMMGEILLETLKASNVDYSPCAITPRPSTIAFVKLVNGQATYAFYDEGTAGRMITTADLPDLGDDCEALHFGAISLIPSPCGETYEALLDREAASRVISLDPNIRPGFIKDKPSHMARIKRMAAKSDIVKFSDEDLDWFGLQGDHDALAAHWLNHGAKLVVITKGAEGASGYTKDRKVTVPSERVTVVDTVGAGDTFDAGILASLKMDNLLTKRQVASLDEQALRNGPDPRRQSRRRHRLPRRRQSTLGARDWSLRLEQDSDPHPPDDTFSP.

Residues 275-326 (EQALRNGPDPRRQSRRRHRLPRRRQSTLGARDWSLRLEQDSDPHPPDDTFSP) are disordered. The segment covering 287–299 (QSRRRHRLPRRRQ) has biased composition (basic residues). Positions 307-326 (WSLRLEQDSDPHPPDDTFSP) are enriched in basic and acidic residues.

The protein belongs to the carbohydrate kinase PfkB family.

It carries out the reaction D-fructose + ATP = D-fructose 6-phosphate + ADP + H(+). In Rhizobium leguminosarum bv. trifolii, this protein is Fructokinase (frk).